Here is a 322-residue protein sequence, read N- to C-terminus: Solute carrier family 35 member B1 (322 aa).

8 consecutive transmembrane segments (helical) span residues 12–32, 51–71, 85–105, 136–156, 168–188, 210–230, 243–263, and 285–305; these read LRLPLCFLGVFVCYFYYGILQ, FALTLVFIQCVINAMFAKILI, WLYAACSVSYVGAMVSSNSAL, YPLAKYLCVLLIVAGVALFMY, TVGFGELLLLMSLTLDGLTGV, LWSTFLLGAGILFTGELWEFL, ILLFGLTSALGQSFIFMTVVY, and VILFANPISSMQWVGTVLVFL. Residues 318–322 carry the Di-lysine motif motif; sequence KKTSH.

It belongs to the nucleotide-sugar transporter family. SLC35B subfamily.

It is found in the endoplasmic reticulum membrane. The catalysed reaction is ADP(in) + ATP(out) = ADP(out) + ATP(in). It catalyses the reaction UDP(out) + ATP(in) = UDP(in) + ATP(out). It carries out the reaction UTP(out) + ATP(in) = UTP(in) + ATP(out). The enzyme catalyses dATP(out) + ATP(in) = dATP(in) + ATP(out). In terms of biological role, ATP:ADP antiporter that catalyzes the exchange of ATP and ADP across the endoplasmic reticulum (ER) membrane. Imports ATP from the cytosol to the ER lumen and exports ADP in the opposite direction. Regulates ER energy metabolism and protein biogenesis. Appears to be part of a calcium-dependent ER to cytosol low energy response axis, where calcium efflux from ER to the cytosol triggers ATP import into the ER lumen to maintain sufficient ATP supply. Provides ATP to ER chaperone HSPA5 that drives protein folding and trafficking in the ER. Can transport dATP, UTP or UDP in exchange for ATP, but the physiological relevance of this process remains to be established. This chain is Solute carrier family 35 member B1 (Slc35b1), found in Mus musculus (Mouse).